Here is a 366-residue protein sequence, read N- to C-terminus: MMQIFIAGAVAFLAAVLFTPVLIRKFSDEGLGQEIREEGPKSHLKKRGTPTMGGIAILVGITLGYIVAVLVGLVFTGSGPGVSGWLVLGLTLALGGVGFADDYIKLVKGRNLGLNARAKLICQLVIAIAFGVMILQFPDSNDITPGSTYLSFVREMPTFNIAVGGAVIGMILFLIFINIVISAWSNAVNLTDGLDGLASGVTAIVMGAYVLITFWQFRNSCADGAAAGCYFVRDPLDLAMLASAGLGACLGFLWWNASPAKIFMGDTGSLALGGLVAGLSITSHTELLMIIVGAIFVLETVSVVIQVTYFKTTGKRVFRMAPIHHHFENGGWAETTVVVRFWLLAALAAMTGFGLFYGEWLTATSF.

A run of 10 helical transmembrane segments spans residues 3-23 (QIFI…PVLI), 55-75 (IAIL…GLVF), 80-100 (PGVS…VGFA), 118-138 (AKLI…LQFP), 161-181 (IAVG…NIVI), 197-217 (LASG…FWQF), 235-255 (PLDL…FLWW), 262-282 (IFMG…LSIT), 287-307 (LLMI…VIQV), and 341-361 (FWLL…GEWL).

It belongs to the glycosyltransferase 4 family. MraY subfamily. The cofactor is Mg(2+).

Its subcellular location is the cell membrane. It carries out the reaction UDP-N-acetyl-alpha-D-muramoyl-L-alanyl-gamma-D-glutamyl-meso-2,6-diaminopimeloyl-D-alanyl-D-alanine + di-trans,octa-cis-undecaprenyl phosphate = di-trans,octa-cis-undecaprenyl diphospho-N-acetyl-alpha-D-muramoyl-L-alanyl-D-glutamyl-meso-2,6-diaminopimeloyl-D-alanyl-D-alanine + UMP. It functions in the pathway cell wall biogenesis; peptidoglycan biosynthesis. In terms of biological role, catalyzes the initial step of the lipid cycle reactions in the biosynthesis of the cell wall peptidoglycan: transfers peptidoglycan precursor phospho-MurNAc-pentapeptide from UDP-MurNAc-pentapeptide onto the lipid carrier undecaprenyl phosphate, yielding undecaprenyl-pyrophosphoryl-MurNAc-pentapeptide, known as lipid I. This is Phospho-N-acetylmuramoyl-pentapeptide-transferase from Corynebacterium urealyticum (strain ATCC 43042 / DSM 7109).